Here is a 347-residue protein sequence, read N- to C-terminus: Very-long-chain 3-oxoacyl-CoA reductase (347 aa).

A helical membrane pass occupies residues 20 to 40 (LLWVVFGLGVLKCTTLSLRFL). NADP(+) contacts are provided by D120, N147, Y223, K227, V256, and S258. Y223 acts as the Proton donor in catalysis. The Lowers pKa of active site Tyr role is filled by K227.

The protein belongs to the short-chain dehydrogenases/reductases (SDR) family. As to quaternary structure, interacts with the fatty acid elongation system components ELO3 and TSC13.

The protein localises to the endoplasmic reticulum membrane. The catalysed reaction is a very-long-chain (3R)-3-hydroxyacyl-CoA + NADP(+) = a very-long-chain 3-oxoacyl-CoA + NADPH + H(+). It catalyses the reaction 3-oxooctadecanoyl-CoA + NADPH + H(+) = (3R)-hydroxyoctadecanoyl-CoA + NADP(+). It carries out the reaction 3-oxoeicosanoyl-CoA + NADPH + H(+) = (3R)-hydroxyeicosanoyl-CoA + NADP(+). The enzyme catalyses 3-oxodocosanoyl-CoA + NADPH + H(+) = (3R)-hydroxydocosanoyl-CoA + NADP(+). The catalysed reaction is 3-oxotetracosanoyl-CoA + NADPH + H(+) = (3R)-hydroxytetracosanoyl-CoA + NADP(+). It catalyses the reaction 3-oxohexacosanoyl-CoA + NADPH + H(+) = (3R)-hydroxyhexacosanoyl-CoA + NADP(+). It participates in lipid metabolism; fatty acid biosynthesis. In terms of biological role, component of the microsomal membrane bound fatty acid elongation system, which produces the 26-carbon very long-chain fatty acids (VLCFA) from palmitate. Catalyzes the reduction of the 3-ketoacyl-CoA intermediate that is formed in each cycle of fatty acid elongation. VLCFAs serve as precursors for ceramide and sphingolipids. This Saccharomyces cerevisiae (strain ATCC 204508 / S288c) (Baker's yeast) protein is Very-long-chain 3-oxoacyl-CoA reductase (IFA38).